The sequence spans 217 residues: CD99 antigen-like protein 2 (217 aa).

An N-terminal signal peptide occupies residues 1–25; that stretch reads MVAWRWACLICLAFSLTTLVQRGSG. Over 26–141 the chain is Extracellular; it reads DTGGFRLEDA…DDSGMSAETG (116 aa). The disordered stretch occupies residues 36–136; the sequence is VEGTSSVKQR…GGDNSDDSGM (101 aa). The span at 50 to 64 shows a compositional bias: low complexity; that stretch reads TTTTRRPGATRAPAK. Acidic residues predominate over residues 70–82; sequence AEDDFNLADALDD. The span at 83–92 shows a compositional bias: basic and acidic residues; sequence QNDRDHDRKK. O-linked (Xyl...) (chondroitin sulfate) serine glycosylation occurs at serine 134. The helical transmembrane segment at 142–162 threads the bilayer; it reads TIAGVASALAMALIGAVSSYI. Over 163 to 217 the chain is Cytoplasmic; it reads SYQQKKFCFSIQQGLNADYVKGENLEAVVCEEPQVKYSALQTQSTEPPPPEPPRI.

The protein belongs to the CD99 family. O-glycosylated.

It is found in the cell membrane. The protein localises to the cell junction. Its subcellular location is the secreted. Its function is as follows. Plays a role in a late step of leukocyte extravasation helping cells to overcome the endothelial basement membrane. Acts at the same site as, but independently of, PECAM1. Homophilic adhesion molecule, but these interactions may not be required for cell aggregation. The sequence is that of CD99 antigen-like protein 2 (CD99L2) from Bos taurus (Bovine).